The chain runs to 449 residues: MSQRWSRKKSRLPLAGLLFILVVTFMILFNERSIQQIHHHAASHTQNLREPSTFDFVKPNVPRINYLGAHEVLDRFSKCNSTKEYSGKKIGWVDPFEDHPGQVTKEEQKCDVFSGKWVFDNSSSYPLHKESQCPYMSDQLACQKHGRKDLEYQHWRWQPHACNLKRWNAIEMWEKLRGKRLMFVGDSLNRGQWISMVCLLQSVIPRDKQSMSPNAHLTIFRAEDYNATVEFLWAPLLVESNSDDPVNHRLSERIIRPDSVLKHASKWQHADILIFNTYLWWRQDSVKLRWSSEEKGSCEEVKSAEGMEMAMDSWGDWVANNVDPNKKRVFFVTMSPTHQWSREWNPGSEGNCYGEKKPIEEESYWGSGSDIPTMRMVKRVLERLGPKVSVINITQLSEYRKDGHPSVYRKFWEPLNEDRLKNPASYSDCTHWCVPGVPDVWNQLLFHFL.

Residues 12-29 (LPLAGLLFILVVTFMILF) traverse the membrane as a helical; Signal-anchor for type II membrane protein segment. A GDS motif motif is present at residues 185–187 (GDS). The DCXHWCLPGXXDXWN motif motif lies at 428-442 (DCTHWCVPGVPDVWN).

The protein belongs to the PC-esterase family. TBL subfamily.

The protein localises to the membrane. Functionally, may act as a bridging protein that binds pectin and other cell wall polysaccharides. Probably involved in maintaining esterification of pectins. May be involved in the specific O-acetylation of cell wall polymers. The chain is Protein trichome birefringence-like 35 (TBL35) from Arabidopsis thaliana (Mouse-ear cress).